Here is a 1093-residue protein sequence, read N- to C-terminus: GPI ethanolamine phosphate transferase 3, catalytic subunit (1093 aa).

The helical transmembrane segment at 4–24 (VSVLLFLAWVCFLFYAGIALF) threads the bilayer. An N-linked (GlcNAc...) asparagine glycan is attached at asparagine 268. 9 consecutive transmembrane segments (helical) span residues 460–480 (AAAC…GFLF), 483–503 (LLLI…GVSV), 512–532 (VVLG…KAWV), 669–689 (LWYG…RLWL), 702–722 (VLFV…YWAL), 748–768 (VMGL…TVLV), 831–851 (SVYS…LMLL), 856–876 (VSLV…LLAA), and 945–965 (FASH…PFLC). Positions 971–991 (KRRQPLPGSESEARVRPEEEE) are disordered. Transmembrane regions (helical) follow at residues 1018 to 1038 (LKYL…ASIL) and 1052 to 1072 (FIFE…GIAL).

The protein belongs to the PIGG/PIGN/PIGO family. PIGO subfamily. As to quaternary structure, forms the ethanolamine phosphate transferase 3 complex composed by PIGO and PIGF. PIGF is required to stabilize PIGO.

The protein resides in the endoplasmic reticulum membrane. It participates in glycolipid biosynthesis; glycosylphosphatidylinositol-anchor biosynthesis. In terms of biological role, catalytic subunit of the ethanolamine phosphate transferase 3 complex that transfers an ethanolamine phosphate (EtNP) from a phosphatidylethanolamine (PE) to the 6-OH position of the third alpha-1,2-linked mannose of the an alpha-D-Man-(1-&gt;2)-alpha-D-Man-(1-&gt;6)-2-PEtn-alpha-D-Man-(1-&gt;4)-alpha-D-GlcN-(1-&gt;6)-(1-radyl,2-acyl-sn-glycero-3-phospho)-2-acyl-inositol (also termed H6) intermediate to generate a 6-PEtn-alpha-D-Man-(1-&gt;2)-alpha-D-Man-(1-&gt;6)-2-PEtn-alpha-D-Man-(1-&gt;4)-alpha-D-GlcN-(1-&gt;6)-(1-radyl,2-acyl-sn-glycero-3-phospho)-2-acyl-inositol (also termed H7) and participates in the tenth step of the glycosylphosphatidylinositol-anchor biosynthesis. The sequence is that of GPI ethanolamine phosphate transferase 3, catalytic subunit from Mus musculus (Mouse).